A 181-amino-acid chain; its full sequence is uncharacterized protein (181 aa).

Belongs to the methyltransferase superfamily.

This is an uncharacterized protein from Bacillus subtilis (strain 168).